Reading from the N-terminus, the 61-residue chain is Large ribosomal subunit protein bL32 (61 aa).

The span at 1–16 (MAVPKRKTSPSRRGMR) shows a compositional bias: basic residues. Positions 1-61 (MAVPKRKTSP…RQILKPKAEA (61 aa)) are disordered. Basic and acidic residues predominate over residues 28 to 44 (VEDKDSGELRRPHHLDL).

The protein belongs to the bacterial ribosomal protein bL32 family.

This chain is Large ribosomal subunit protein bL32, found in Xanthobacter autotrophicus (strain ATCC BAA-1158 / Py2).